The primary structure comprises 267 residues: Palmitoyltransferase ZDHHC12 (267 aa).

At 1 to 9 (MALWPPLNS) the chain is on the cytoplasmic side. A helical transmembrane segment spans residues 10–30 (GMLVRTGHTVLTWGITLVLFL). Residues 31–43 (HDTELRQWEEQGE) are Lumenal-facing. The chain crosses the membrane as a helical span at residues 44-64 (LLLPLTFLLLVLSSLLLYLAV). Over 65 to 140 (SLMDPGYVTT…ENCVGERNHP (76 aa)) the chain is Cytoplasmic. One can recognise a DHHC domain in the interval 97–147 (RRCRHCLVLQPLRARHCRDCRRCVRRYDHHCPWMENCVGERNHPLFVAYLA). Cys-127 serves as the catalytic S-palmitoyl cysteine intermediate. Residues 141–161 (LFVAYLALQLVVLLWGLCLAW) traverse the membrane as a helical segment. The Lumenal portion of the chain corresponds to 162-178 (SGLQFFQPWGLWLRSTG). A helical transmembrane segment spans residues 179-199 (LLFTTFLLLSFFALVVALLLA). At 200 to 267 (SHLYLVARNT…EEEEGSSQVV (68 aa)) the chain is on the cytoplasmic side.

This sequence belongs to the DHHC palmitoyltransferase family.

The protein localises to the golgi apparatus membrane. The protein resides in the endoplasmic reticulum membrane. It carries out the reaction L-cysteinyl-[protein] + hexadecanoyl-CoA = S-hexadecanoyl-L-cysteinyl-[protein] + CoA. Its function is as follows. Palmitoyltransferase that catalyzes the addition of palmitate onto various protein substrates. Has a palmitoyltransferase activity toward gephyrin/GPHN, regulating its clustering at synapses and its function in gamma-aminobutyric acid receptor clustering. Thereby, indirectly regulates GABAergic synaptic transmission. Negatively regulates NLRP3-driven inflammation. Catalyzes NLRP3 palmitoylation, leading to its degradation via the chaperone-mediated autophagy (CMA) process. The sequence is that of Palmitoyltransferase ZDHHC12 from Mus musculus (Mouse).